We begin with the raw amino-acid sequence, 148 residues long: Helix-loop-helix protein 14 (148 aa).

Disordered regions lie at residues 1–21 (MAKK…HQVN), 63–83 (DPQQ…NSNN), and 112–132 (GDVS…SYSP). The tract at residues 4–17 (KNQVARNERERKRV) is basic motif. The region spanning 4-56 (KNQVARNERERKRVHQVNHGFDVLRNRLQPKNHTKKWSKADTLREAVKYIQQL) is the bHLH domain. A helix-loop-helix motif region spans residues 18 to 56 (HQVNHGFDVLRNRLQPKNHTKKWSKADTLREAVKYIQQL). Over residues 63 to 78 (DPQQPSVSSSTPDYTM) the composition is skewed to polar residues. A compositionally biased stretch (low complexity) spans 120 to 132 (SPTSSVSSSSYSP).

It localises to the nucleus. Its function is as follows. Probable transcription factor, involved in determining neuroblast cell fate, morphogenesis and aspects of terminal differentiation in both left/right symmetric and asymmetric neuronal lineages. This Caenorhabditis elegans protein is Helix-loop-helix protein 14.